The sequence spans 235 residues: Demethylmenaquinone methyltransferase (235 aa).

Residues T58, D79, and 106-107 (NA) contribute to the S-adenosyl-L-methionine site.

Belongs to the class I-like SAM-binding methyltransferase superfamily. MenG/UbiE family.

It catalyses the reaction a 2-demethylmenaquinol + S-adenosyl-L-methionine = a menaquinol + S-adenosyl-L-homocysteine + H(+). It participates in quinol/quinone metabolism; menaquinone biosynthesis; menaquinol from 1,4-dihydroxy-2-naphthoate: step 2/2. Its function is as follows. Methyltransferase required for the conversion of demethylmenaquinol (DMKH2) to menaquinol (MKH2). The chain is Demethylmenaquinone methyltransferase from Shouchella clausii (strain KSM-K16) (Alkalihalobacillus clausii).